The sequence spans 385 residues: UPF0284 protein A9601_04941 (385 aa).

The protein belongs to the UPF0284 family.

This is UPF0284 protein A9601_04941 from Prochlorococcus marinus (strain AS9601).